The sequence spans 37 residues: Cytochrome b6-f complex subunit 5 (37 aa).

Residues 5–25 form a helical membrane-spanning segment; it reads LLSGIVLGMITVSALGLFVAA.

This sequence belongs to the PetG family. The 4 large subunits of the cytochrome b6-f complex are cytochrome b6, subunit IV (17 kDa polypeptide, PetD), cytochrome f and the Rieske protein, while the 4 small subunits are PetG, PetL, PetM and PetN. The complex functions as a dimer.

The protein localises to the plastid. The protein resides in the chloroplast thylakoid membrane. In terms of biological role, component of the cytochrome b6-f complex, which mediates electron transfer between photosystem II (PSII) and photosystem I (PSI), cyclic electron flow around PSI, and state transitions. PetG is required for either the stability or assembly of the cytochrome b6-f complex. The protein is Cytochrome b6-f complex subunit 5 of Trieres chinensis (Marine centric diatom).